Consider the following 430-residue polypeptide: T-kininogen 2 (430 aa).

The signal sequence occupies residues 1–18; it reads MKLITILLLCSRLLPSLA. Q19 carries the post-translational modification Pyrrolidone carboxylic acid. The region spanning 28–131 is the Cystatin kininogen-type 1 domain; it reads CNDETVFQAV…TQICNITPGK (104 aa). Disulfide bonds link C28–C404, C83–C94, C107–C125, C141–C144, C205–C217, C228–C247, C263–C266, C327–C339, and C350–C369. N-linked (GlcNAc...) asparagine glycosylation is present at N82. The 104-residue stretch at 150–253 folds into the Cystatin kininogen-type 2 domain; that stretch reads MDSSDLKPVL…SQSCDLYPGD (104 aa). Residues N168 and N204 are each glycosylated (N-linked (GlcNAc...) asparagine). In terms of domain architecture, Cystatin kininogen-type 3 spans 272 to 375; that stretch reads VDSPELKEAL…TVRCQALDMM (104 aa). N326 carries N-linked (GlcNAc...) asparagine glycosylation. Residues 410–430 form a disordered region; it reads LSKAGAGPAPDHQAEASTVTP.

As T-kinin is preceded by a Met instead of an Arg or Lys, it is not released from its precursor by either tissue or plasma kallikrein. Plasma.

It localises to the secreted. It is found in the extracellular space. Its function is as follows. Kininogens are plasma glycoproteins with a number of functions: (1) as precursor of the active peptide bradykinin they effect smooth muscle contraction, induction of hypotension and increase of vascular permeability. (2) They play a role in blood coagulation by helping to position optimally prekallikrein and factor XI next to factor XII. (3) They are inhibitor of thiol proteases. This is T-kininogen 2 from Rattus norvegicus (Rat).